Reading from the N-terminus, the 389-residue chain is Radial spoke head protein 3 homolog B (389 aa).

Positions 63-106 (PTGQVPGQPDPLELQRQQQARRRALARKRAQEQLKPRTPEPVEG) are disordered. Positions 81–90 (QARRRALARK) are enriched in basic residues. The segment covering 91 to 106 (RAQEQLKPRTPEPVEG) has biased composition (basic and acidic residues). A Phosphothreonine; by MAPK1 modification is found at Thr143. Residues 206-242 (YEEIRNVELAEVQRLEEQERRHREEKERRKKQQWEIV) adopt a coiled-coil conformation. Residues 332–389 (EAMPPGQKTNVINGPNTVTDPSVTTLHTQKPVLDRVSSQPAPSQERKPVEEGGHLMAE) are disordered. Residues 338–359 (QKTNVINGPNTVTDPSVTTLHT) show a composition bias toward polar residues. Residues 375–389 (QERKPVEEGGHLMAE) are compositionally biased toward basic and acidic residues.

Belongs to the flagellar radial spoke RSP3 family. Component of the axonemal radial spoke 1 (RS1) and 2 (RS2) complexes, at least composed of spoke head proteins RSPH1, RSPH3B, RSPH9 and the cilia-specific component RSPH4A or sperm-specific component RSPH6A, spoke stalk proteins RSPH14, DNAJB13, DYDC1, ROPN1L and NME5, and the RS1 complex-specific anchor protein IQUB. Interacts with IQUB. Interacts with phosphorylated MAPK1. Interacts with MEK1. Interacts with PKA regulatory subunits PRKAR1A and PRKAR1B. Interacts with RSPH1. Interacts with RSPH4A. Interacts with RSPH6A. Interacts with RSPH9. Interacts with LRRC23. In terms of tissue distribution, expressed in ependymal cells (at protein level).

It is found in the cytoplasm. It localises to the cytoskeleton. The protein localises to the cilium axoneme. The protein resides in the flagellum axoneme. Functions as part of axonemal radial spoke complexes that play an important part in the motility of sperm and cilia. Functions as a protein kinase A-anchoring protein that scaffolds the cAMP-dependent protein kinase holoenzyme. May serve as a point of convergence for MAPK and PKA signaling in cilia. The protein is Radial spoke head protein 3 homolog B (Rsph3b) of Mus musculus (Mouse).